We begin with the raw amino-acid sequence, 241 residues long: Carboxy-S-adenosyl-L-methionine synthase 1 (241 aa).

Residues tyrosine 37, 61–63 (GCS), asparagine 131, and arginine 198 each bind S-adenosyl-L-methionine.

Belongs to the class I-like SAM-binding methyltransferase superfamily. Cx-SAM synthase family. In terms of assembly, homodimer.

The catalysed reaction is prephenate + S-adenosyl-L-methionine = carboxy-S-adenosyl-L-methionine + 3-phenylpyruvate + H2O. Functionally, catalyzes the conversion of S-adenosyl-L-methionine (SAM) to carboxy-S-adenosyl-L-methionine (Cx-SAM). The sequence is that of Carboxy-S-adenosyl-L-methionine synthase 1 from Yersinia pseudotuberculosis serotype IB (strain PB1/+).